A 910-amino-acid chain; its full sequence is Protein CHROMATIN REMODELING 25 (910 aa).

Acidic residues-rich tracts occupy residues 1–18 (MEEE…DDSS) and 26–39 (QDSE…ECED). Positions 1–39 (MEEEDEEILSSSDCDDSSDSYKDDSQDSEGENDNPECED) are disordered. Residues 198–371 (LHGSANINGC…FAMVNFTNPG (174 aa)) form the Helicase ATP-binding domain. An ATP-binding site is contributed by 211-218 (DDMGLGKT). The short motif at 322-325 (DEAH) is the DEAH box element. The stretch at 396–417 (TEEEKNLAADRSAELSSKVNQF) forms a coiled coil. Residues 538-696 (VLSRLLANLR…QTDNSTRQGN (159 aa)) form the Helicase C-terminal domain. A disordered region spans residues 828 to 861 (VSPKTVESEEHNRNQPVNKRAFNKPQQRPREPLQ).

The protein belongs to the SNF2/RAD54 helicase family. Interacts with RAD51. Binds to the geminivirus mungbean yellow mosaic virus (MYMV) and to the tomato leaf curl virus (ToLCV) replication-associated proteins. In terms of tissue distribution, expressed ubiquitously, with the highest levels of expression in flower buds. Present in flower buds (at protein level).

Its subcellular location is the nucleus. Functionally, dissociates RAD51 from nucleoprotein filaments formed on dsDNA. Could be involved in the turnover of RAD51 protein-dsDNA filaments. Addition of RAD54 overcomes inhibition of DNA strand exchange by RAD51 bound to substrate dsDNA. Species preference in the RAD51 dissociation and DNA strand exchange assays underlines the importance of specific RAD54-RAD51 interactions. RAD51 is unable to release dsDNA upon ATP hydrolysis, leaving it stuck on the heteroduplex DNA product after DNA strand exchange. Involved in DNA repair and mitotic recombination. Functions in the homologous recombinational DNA repair (RAD52) pathway. Required for synthesis-dependent strand annealing (SDSA) during double-strand break repair. Facilitates geminiviral replication (e.g. geminivirus mungbean yellow mosaic virus (MYMV) and tomato leaf curl virus (ToLCV)). In Arabidopsis thaliana (Mouse-ear cress), this protein is Protein CHROMATIN REMODELING 25 (CHR25).